Consider the following 172-residue polypeptide: Large ribosomal subunit protein uL10 (172 aa).

The protein belongs to the universal ribosomal protein uL10 family. As to quaternary structure, part of the ribosomal stalk of the 50S ribosomal subunit. The N-terminus interacts with L11 and the large rRNA to form the base of the stalk. The C-terminus forms an elongated spine to which L12 dimers bind in a sequential fashion forming a multimeric L10(L12)X complex.

Its function is as follows. Forms part of the ribosomal stalk, playing a central role in the interaction of the ribosome with GTP-bound translation factors. This is Large ribosomal subunit protein uL10 from Rhodopseudomonas palustris (strain TIE-1).